The sequence spans 457 residues: MSALRRSGYGPSDGPSYGRYYGPGGGDVPVHVPPPLYPPLRPEPPQPPVSWRGRGGAPAETTWPGEGAGGDGYYPSGGAWAEASRAGGGHQEQPPYPGYNSNYWNSVRPRAPYPGSYSVRPELQGQSLNSYANGAYGPPYPPGPGASTASYSGAYYVPGYTQSNYSTEVPNTYRSPGNSPTPMSRWMYSQQDCPTEAPPLRGQVPGYPASQNPGMTLPHYPYGDGNRAVPQSGGTGRPQDDAWASSAYGMGARYPWPSAAPSAPSAGSLYMTESASPWPGNSSPQPPPSPPPQQPKDPSYSYNPSGQGLSRHSFPCSVHQYESPGAVNNDNSDLLDSQVQYSAEPQLYGNASSEHPSNQVPSNNLPEECFSSDEGTPPSIKKIIHVLEKVQFLEQEVEEFVGKKTDKAYWLLEEMLTKELLELDSVETGGQDSVRQARKEAVCKIQAILEKLEKKGL.

Residues 1–20 are compositionally biased toward low complexity; sequence MSALRRSGYGPSDGPSYGRY. Residues 1 to 104 are disordered; it reads MSALRRSGYG…PYPGYNSNYW (104 aa). At S7 the chain carries Phosphoserine. The span at 31-48 shows a compositional bias: pro residues; the sequence is HVPPPLYPPLRPEPPQPP. Residues R41, R54, R108, and R185 each carry the omega-N-methylarginine modification. 2 disordered regions span residues 128-335 and 348-374; these read LNSY…SDLL and YGNA…SSDE. Positions 160–193 are enriched in polar residues; that stretch reads YTQSNYSTEVPNTYRSPGNSPTPMSRWMYSQQDC. Over residues 255–268 the composition is skewed to low complexity; the sequence is PWPSAAPSAPSAGS. Positions 284–295 are enriched in pro residues; that stretch reads PQPPPSPPPQQP. 2 stretches are compositionally biased toward polar residues: residues 326–335 and 348–365; these read AVNNDNSDLL and YGNA…SNNL. Residues 379-456 form the BAG domain; that stretch reads SIKKIIHVLE…AILEKLEKKG (78 aa).

As to quaternary structure, binds to the ATPase domain of HSP/HSC70 chaperones. Binds to the death domain of TNFRSF12. Binds to the death domain of TNFRSF1A in the absence of TNF and thereby prevents binding of adapter molecules such as TRADD or TRAF2. Interacts with PRKN.

The protein resides in the cytoplasm. In terms of biological role, inhibits the chaperone activity of HSP70/HSC70 by promoting substrate release. Prevents constitutive TNFRSF1A signaling. Negative regulator of PRKN translocation to damaged mitochondria. The sequence is that of BAG family molecular chaperone regulator 4 (Bag4) from Mus musculus (Mouse).